Here is a 474-residue protein sequence, read N- to C-terminus: Iroquois-class homeodomain protein irx-5 (474 aa).

The homeobox; TALE-type DNA-binding region spans 109-171 (DPAYRKNASR…NARRRLKKEN (63 aa)). Disordered stretches follow at residues 174–222 (TWTP…SPDG), 252–294 (ERNG…IQQL), and 453–474 (SQSQ…MSSI). The segment covering 182–199 (EDEDDDENIDLEKNEEDD) has biased composition (acidic residues). Over residues 263–273 (PPTPPLCPPDQ) the composition is skewed to pro residues.

It belongs to the TALE/IRO homeobox family. In terms of tissue distribution, early in gastrulation, expressed in cells beneath the blastopore lip. Subsequently expressed in the neural plate in overlapping patterns with other irx members, which all share an anterior border of expression. At the time of neural tube closure (stage 19) in regions of the midbrain, hindbrain, neural tube and optic vesicle, where expression continues during tailbud stages. In stage 34, expressed throughout the eye retina. Does not appear to be expressed in the developing heart or pronephros.

Its subcellular location is the nucleus. Acts partially redundantly with other irx members in neural patterning. Required for formation of the posterior forebrain, midbrain, hindbrain, and to a lesser extent, spinal cord. Patterns the neuroectoderm in both the anterior/posterior and dorsal/ventral axes. Does not appear to play a role in pronephros kidney development. Involved in craniofacial and gonadal development. Modulates the migration of progenitor cell populations in branchial arches and gonads by repressing CXCL12. This is Iroquois-class homeodomain protein irx-5 (irx5) from Xenopus laevis (African clawed frog).